The chain runs to 260 residues: Dof zinc finger protein DOF1.2 (260 aa).

The Dof-type zinc-finger motif lies at 38 to 92 (PACPRCASSNTKFCYYNNYSLSQPRYFCKGCRRYWTKGGSLRNIPVGGGCRKRSR). Zn(2+) contacts are provided by cysteine 40, cysteine 43, cysteine 65, and cysteine 68. Positions 83-124 (VGGGCRKRSRSRQNSHKRFGRNENRPDGLINQDDGFQSSPPG) are disordered. Over residues 87–101 (CRKRSRSRQNSHKRF) the composition is skewed to basic residues.

The protein resides in the nucleus. Transcription factor that binds specifically to a 5'-AA[AG]G-3' consensus core sequence. The chain is Dof zinc finger protein DOF1.2 (DOF1.2) from Arabidopsis thaliana (Mouse-ear cress).